A 365-amino-acid chain; its full sequence is Chaperone protein DnaJ (365 aa).

Residues 5 to 71 enclose the J domain; the sequence is DFYEILGIAK…QKRQAYDQFG (67 aa). The segment at 128-206 adopts a CR-type zinc-finger fold; the sequence is GTTVKIRIPK…CHGKGVVHKQ (79 aa). Cys-141, Cys-144, Cys-158, Cys-161, Cys-180, Cys-183, Cys-194, and Cys-197 together coordinate Zn(2+). 4 CXXCXGXG motif repeats span residues 141–148, 158–165, 180–187, and 194–201; these read CDTCSGTG, CLTCGGAG, CNACSGTG, and CNNCHGKG.

Belongs to the DnaJ family. Homodimer. It depends on Zn(2+) as a cofactor.

It is found in the cytoplasm. Functionally, participates actively in the response to hyperosmotic and heat shock by preventing the aggregation of stress-denatured proteins and by disaggregating proteins, also in an autonomous, DnaK-independent fashion. Unfolded proteins bind initially to DnaJ; upon interaction with the DnaJ-bound protein, DnaK hydrolyzes its bound ATP, resulting in the formation of a stable complex. GrpE releases ADP from DnaK; ATP binding to DnaK triggers the release of the substrate protein, thus completing the reaction cycle. Several rounds of ATP-dependent interactions between DnaJ, DnaK and GrpE are required for fully efficient folding. Also involved, together with DnaK and GrpE, in the DNA replication of plasmids through activation of initiation proteins. This chain is Chaperone protein DnaJ, found in Vesicomyosocius okutanii subsp. Calyptogena okutanii (strain HA).